The sequence spans 328 residues: GTPase Obg 2 (328 aa).

In terms of domain architecture, Obg spans 1–139; it reads MSFRREKFIE…HCVLLKLKIV (139 aa). Residues 140 to 309 enclose the OBG-type G domain; sequence SDVGIIGMPN…LHAQVKKAVV (170 aa). GTP-binding positions include 146-153, 171-175, 192-195, 259-262, and 290-292; these read GMPNAGKS, FTTLE, DIPG, NKCD, and GDE. Serine 153 and threonine 173 together coordinate Mg(2+).

Belongs to the TRAFAC class OBG-HflX-like GTPase superfamily. OBG GTPase family. Monomer. Requires Mg(2+) as cofactor.

The protein localises to the cytoplasm. In terms of biological role, an essential GTPase which binds GTP, GDP and possibly (p)ppGpp with moderate affinity, with high nucleotide exchange rates and a fairly low GTP hydrolysis rate. Plays a role in control of the cell cycle, stress response, ribosome biogenesis and in those bacteria that undergo differentiation, in morphogenesis control. The polypeptide is GTPase Obg 2 (Anaplasma marginale (strain Florida)).